A 987-amino-acid chain; its full sequence is Ras guanine nucleotide exchange factor efc25 (987 aa).

Over residues 1 to 10 (MRRPNLDRLR) the composition is skewed to basic and acidic residues. Disordered stretches follow at residues 1-50 (MRRP…STMS), 100-130 (FSST…PEIR), and 529-552 (NANT…ISRS). Low complexity predominate over residues 19–39 (TSVSKPSTPSYSTYSLSPTFS). Composition is skewed to polar residues over residues 40 to 50 (DKSVLSPSTMS), 102 to 111 (STHSLTRQPS), and 540 to 552 (RQTN…ISRS). Ser-552 is subject to Phosphoserine. Positions 590–723 (SDNNVKGGTL…VILSEIDNLW (134 aa)) constitute an N-terminal Ras-GEF domain. The 234-residue stretch at 752-985 (TPEEFASQMT…FDKSLSLEPR (234 aa)) folds into the Ras-GEF domain.

It is found in the cytoplasm. Has a role in chromosome segregation and cell morphology upstream of the ras1-scd1 pathway. Promotes the exchange of ras1-bound GDP by GTP leading to its activation. The chain is Ras guanine nucleotide exchange factor efc25 (efc25) from Schizosaccharomyces pombe (strain 972 / ATCC 24843) (Fission yeast).